Reading from the N-terminus, the 202-residue chain is Adapter protein MecA 2 (202 aa).

Belongs to the MecA family. As to quaternary structure, homodimer.

Its function is as follows. Enables the recognition and targeting of unfolded and aggregated proteins to the ClpC protease or to other proteins involved in proteolysis. Acts negatively in the development of competence by binding ComK and recruiting it to the ClpCP protease. When overexpressed, inhibits sporulation. Also involved in Spx degradation by ClpC. This is Adapter protein MecA 2 (mecA2) from Bacillus anthracis.